The sequence spans 35 residues: Small toxic polypeptide LdrA (35 aa).

Residues 8–28 (MIFWHDLAAPILAGIITAAIV) form a helical membrane-spanning segment.

Belongs to the Ldr toxic peptide family.

Its subcellular location is the cell inner membrane. Its function is as follows. Toxic component of a type I toxin-antitoxin (TA) system. Inhibits ATP synthesis possibly due to its insertion in the cell inner membrane, ATP levels drop over 50% 2 minutes after induction. Overexpression is toxic leading to cell death, it inhibits cell growth within 30 minutes; C-terminally tagged versions of the protein are toxic while N-terminally tagged versions are not. In Escherichia coli (strain K12), this protein is Small toxic polypeptide LdrA (ldrA).